The chain runs to 205 residues: Large ribosomal subunit protein bL17c (205 aa).

Residues 1–89 constitute a chloroplast transit peptide; sequence MASASTTWSM…VIDNGGRVFA (89 aa).

It belongs to the bacterial ribosomal protein bL17 family. Part of the 50S ribosomal subunit.

It is found in the plastid. The protein resides in the chloroplast. Its function is as follows. This protein binds directly to 23S ribosomal RNA. The protein is Large ribosomal subunit protein bL17c (RPL17) of Nicotiana tabacum (Common tobacco).